A 631-amino-acid polypeptide reads, in one-letter code: Phosphomethylpyrimidine synthase (631 aa).

Residues Asn-239, Met-268, Tyr-297, His-333, 353–355 (SRG), 394–397 (DGLR), and Glu-433 contribute to the substrate site. His-437 lines the Zn(2+) pocket. Tyr-460 contributes to the substrate binding site. His-501 is a binding site for Zn(2+). 3 residues coordinate [4Fe-4S] cluster: Cys-581, Cys-584, and Cys-589.

It belongs to the ThiC family. In terms of assembly, homodimer. Requires [4Fe-4S] cluster as cofactor.

The catalysed reaction is 5-amino-1-(5-phospho-beta-D-ribosyl)imidazole + S-adenosyl-L-methionine = 4-amino-2-methyl-5-(phosphooxymethyl)pyrimidine + CO + 5'-deoxyadenosine + formate + L-methionine + 3 H(+). It participates in cofactor biosynthesis; thiamine diphosphate biosynthesis. Functionally, catalyzes the synthesis of the hydroxymethylpyrimidine phosphate (HMP-P) moiety of thiamine from aminoimidazole ribotide (AIR) in a radical S-adenosyl-L-methionine (SAM)-dependent reaction. The protein is Phosphomethylpyrimidine synthase of Salmonella gallinarum (strain 287/91 / NCTC 13346).